The following is a 345-amino-acid chain: RING finger protein 228 (345 aa).

The span at 1 to 21 (MAAPASDSGGSQQSPSSSPGS) shows a compositional bias: low complexity. Residues 1–43 (MAAPASDSGGSQQSPSSSPGSREGAGVAAKGAPDCGDAGARDA) form a disordered region. Residues 58–125 (CKICYNYFDA…PGAIACPVCR (68 aa)) form an RING-type zinc finger. The segment at 159-213 (LPQDRLPPLPARLPAPAAAPPPTPAPPPPPSPAPPQPPPPPPAEDAAPGPRARPG) is disordered. The segment covering 163-201 (RLPPLPARLPAPAAAPPPTPAPPPPPSPAPPQPPPPPPA) has biased composition (pro residues). Residues 202-213 (EDAAPGPRARPG) show a composition bias toward low complexity. A run of 2 helical transmembrane segments spans residues 236-256 (VCVV…LIFV) and 290-310 (LSVA…ICWL). The tract at residues 319–345 (AGSTGGSGGGGGPRARAAAGGARRSDT) is disordered. Residues 321-331 (STGGSGGGGGP) show a composition bias toward gly residues. Low complexity predominate over residues 332–345 (RARAAAGGARRSDT).

The protein resides in the membrane. The polypeptide is RING finger protein 228 (Homo sapiens (Human)).